A 287-amino-acid chain; its full sequence is uncharacterized protein (287 aa).

Positions 115–287 (PQNFDREWNP…NLAIELLKAI (173 aa)) constitute an ATP-grasp domain. ATP contacts are provided by residues K145 and 178–188 (QKYITCSKGES). Residues D248, E261, and N263 each coordinate Mg(2+). Positions 248, 261, and 263 each coordinate Mn(2+).

It belongs to the RimK family.

This is an uncharacterized protein from Mycoplasma genitalium (strain ATCC 33530 / DSM 19775 / NCTC 10195 / G37) (Mycoplasmoides genitalium).